The primary structure comprises 279 residues: Putative pyruvate, phosphate dikinase regulatory protein (279 aa).

Position 153-160 (153-160) interacts with ADP; the sequence is GVSRTSKT.

It belongs to the pyruvate, phosphate/water dikinase regulatory protein family. PDRP subfamily.

It carries out the reaction N(tele)-phospho-L-histidyl/L-threonyl-[pyruvate, phosphate dikinase] + ADP = N(tele)-phospho-L-histidyl/O-phospho-L-threonyl-[pyruvate, phosphate dikinase] + AMP + H(+). The enzyme catalyses N(tele)-phospho-L-histidyl/O-phospho-L-threonyl-[pyruvate, phosphate dikinase] + phosphate + H(+) = N(tele)-phospho-L-histidyl/L-threonyl-[pyruvate, phosphate dikinase] + diphosphate. In terms of biological role, bifunctional serine/threonine kinase and phosphorylase involved in the regulation of the pyruvate, phosphate dikinase (PPDK) by catalyzing its phosphorylation/dephosphorylation. This Bradyrhizobium sp. (strain ORS 278) protein is Putative pyruvate, phosphate dikinase regulatory protein.